A 431-amino-acid polypeptide reads, in one-letter code: MGKNVVVLGTQWGDEGKGKIVDLLTEQSKYVVRYQGGHNAGHTLVIDGEKTVLHLIPSGILRDNVKCIIGNGVVLAPDALMTEIKMLKERGVPVEERLLISEACPLILPFHCALDIAREKARGNNAIGTTGRGIGPAYEDKVSRRGLRVGDLFDAELFAEKLKEVMAYHNFMLTEYYKCEAVDYEETLKDALAIADYLKSMCVDVTELLDQARKAGEPILFEGAQGTLLDIDHGTYPFVTSSNTTAGGVATGSGFGPRHLDYVLGIMKAYTTRVGAGPFPTELQCEIGDHLGTKGHEFGATTGRKRRPGWLDVVAMKRAVQINSISGFCLTKLDVLDGLEEVKICVGYQYPDGSVATVTPLAAEGYEQVTPVLETMPGWSENTFGATSVEQLPQAALNYIKRLEELLDTPIDIISTGPDRNETMILVNPFS.

GTP contacts are provided by residues 13-19 and 41-43; these read GDEGKGK and GHT. The active-site Proton acceptor is the Asp14. Mg(2+)-binding residues include Asp14 and Gly41. IMP-binding positions include 14-17, 39-42, Thr130, Arg144, Gln225, Thr240, and Arg304; these read DEGK and NAGH. Residue His42 is the Proton donor of the active site. 300–306 is a substrate binding site; that stretch reads ATTGRKR. GTP contacts are provided by residues Arg306, 332 to 334, and 415 to 417; these read KLD and STG.

This sequence belongs to the adenylosuccinate synthetase family. As to quaternary structure, homodimer. Mg(2+) is required as a cofactor.

It localises to the cytoplasm. It catalyses the reaction IMP + L-aspartate + GTP = N(6)-(1,2-dicarboxyethyl)-AMP + GDP + phosphate + 2 H(+). Its pathway is purine metabolism; AMP biosynthesis via de novo pathway; AMP from IMP: step 1/2. Plays an important role in the de novo pathway of purine nucleotide biosynthesis. Catalyzes the first committed step in the biosynthesis of AMP from IMP. This chain is Adenylosuccinate synthetase, found in Shewanella woodyi (strain ATCC 51908 / MS32).